A 343-amino-acid polypeptide reads, in one-letter code: S-adenosylmethionine:tRNA ribosyltransferase-isomerase (343 aa).

The protein belongs to the QueA family. In terms of assembly, monomer.

The protein resides in the cytoplasm. The catalysed reaction is 7-aminomethyl-7-carbaguanosine(34) in tRNA + S-adenosyl-L-methionine = epoxyqueuosine(34) in tRNA + adenine + L-methionine + 2 H(+). It functions in the pathway tRNA modification; tRNA-queuosine biosynthesis. In terms of biological role, transfers and isomerizes the ribose moiety from AdoMet to the 7-aminomethyl group of 7-deazaguanine (preQ1-tRNA) to give epoxyqueuosine (oQ-tRNA). This chain is S-adenosylmethionine:tRNA ribosyltransferase-isomerase, found in Syntrophotalea carbinolica (strain DSM 2380 / NBRC 103641 / GraBd1) (Pelobacter carbinolicus).